Here is a 1523-residue protein sequence, read N- to C-terminus: Slit homolog 3 protein (1523 aa).

The N-terminal stretch at 1–33 (MAPGRTGAGAAVRARLALALALASILSGPPAAA) is a signal peptide. The region spanning 34-61 (CPTKCTCSAASVDCHGLGLRAVPRGIPR) is the LRRNT domain. 6 LRR repeats span residues 62–83 (NAER…DFTG), 86–107 (NLRV…AFQD), 110–131 (QLER…LFQS), 134–155 (KLTR…AFRG), 158–179 (GVKN…AFRA), and 182–203 (DLEI…SFNH). An N-linked (GlcNAc...) asparagine glycan is attached at asparagine 72. Residue asparagine 192 is glycosylated (N-linked (GlcNAc...) asparagine). Residues 215–265 (NHLYCDCHLAWLSDWLRQRRTIGQFTLCMAPVHLRGFSVADVQKKEYVCPG) form the LRRCT 1 domain. The region spanning 271–307 (PACNANSLSCPSACSCSNNIVDCRGKGLTEIPANLPE) is the LRRNT 2 domain. A disulfide bridge links cysteine 284 with cysteine 293. LRR repeat units follow at residues 308-329 (GIVE…AFIQ), 332-353 (KLKR…AFQG), 356-377 (SLTS…LFDG), 380-401 (SLQL…TFQD), and 404-425 (NLNL…LFAP). The LRRCT 2 domain occupies 437 to 487 (NPFVCDCHLKWLADYLQDNPIETSGARCSSPRRLANKRISQIKSKKFRCSG). 4 disulfides stabilise this stretch: cysteine 441–cysteine 464, cysteine 443–cysteine 485, cysteine 505–cysteine 511, and cysteine 509–cysteine 518. The LRRNT 3 domain maps to 496-532 (SSECFMDLVCPEKCRCEGTIVDCSNQKLSRIPSHLPE). 5 LRR repeats span residues 533-554 (YTTD…GIFK), 558-579 (NLRK…AFDG), 582-603 (GVQE…MFRG), 606-627 (GLKT…TFAG), and 630-651 (SVRL…AFTT). A glycan (N-linked (GlcNAc...) asparagine) is linked at asparagine 563. The N-linked (GlcNAc...) asparagine glycan is linked to asparagine 622. One can recognise an LRRCT 3 domain in the interval 663-713 (NPFNCNCHMAWLGRWLRKRRIVSGNPRCQKPFFLKEIPIQDVAIQDFTCEG). Intrachain disulfides connect cysteine 667–cysteine 690 and cysteine 669–cysteine 711. The LRRNT 4 domain maps to 716-752 (ENSCQLSPRCPEQCTCVETVVRCSNRGLHTLPKGMPK). LRR repeat units lie at residues 753 to 774 (DVTE…LSTF), 776 to 797 (QLTL…TFSN), 800 to 821 (HLST…AFNG), and 824 to 845 (SLRV…SFND). 3 N-linked (GlcNAc...) asparagine glycosylation sites follow: asparagine 784, asparagine 792, and asparagine 797. In terms of domain architecture, LRRCT 4 spans 857–907 (NPLHCDCSLRWLSEWIKAGYKEPGIARCSSPESMADRLLLTTPTHRFQCKG). 6 consecutive EGF-like domains span residues 918 to 953 (NACL…KDCT), 955 to 994 (PINT…QRCE), 996 to 1032 (NPDD…ELCD), 1034 to 1072 (VIDY…KLCE), 1074 to 1110 (DNDD…LFCE), and 1119 to 1155 (QTSP…PRCE). 18 cysteine pairs are disulfide-bonded: cysteine 920-cysteine 931, cysteine 925-cysteine 941, cysteine 943-cysteine 952, cysteine 959-cysteine 970, cysteine 964-cysteine 982, cysteine 984-cysteine 993, cysteine 1000-cysteine 1011, cysteine 1005-cysteine 1020, cysteine 1022-cysteine 1031, cysteine 1038-cysteine 1051, cysteine 1045-cysteine 1060, cysteine 1062-cysteine 1071, cysteine 1078-cysteine 1089, cysteine 1083-cysteine 1098, cysteine 1100-cysteine 1109, cysteine 1123-cysteine 1134, cysteine 1128-cysteine 1143, and cysteine 1145-cysteine 1154. A glycan (N-linked (GlcNAc...) asparagine) is linked at asparagine 928. A glycan (N-linked (GlcNAc...) asparagine) is linked at asparagine 1025. In terms of domain architecture, Laminin G-like spans 1158-1332 (ITVNFVGKDS…PQSLGVSPGC (175 aa)). Residues asparagine 1181 and asparagine 1247 are each glycosylated (N-linked (GlcNAc...) asparagine). Disulfide bonds link cysteine 1305–cysteine 1332, cysteine 1355–cysteine 1364, cysteine 1372–cysteine 1382, cysteine 1377–cysteine 1391, and cysteine 1393–cysteine 1402. EGF-like domains follow at residues 1340-1365 (HGLC…PLCD) and 1368-1403 (AQDP…PLCD). The N-linked (GlcNAc...) asparagine glycan is linked to asparagine 1406. The EGF-like 9 domain occupies 1408 to 1444 (SANACSAFKCHHGQCHISDRGEPYCLCQPGFSGNHCE). Cystine bridges form between cysteine 1412–cysteine 1422, cysteine 1417–cysteine 1432, cysteine 1434–cysteine 1443, cysteine 1449–cysteine 1487, cysteine 1467–cysteine 1501, cysteine 1478–cysteine 1517, and cysteine 1482–cysteine 1519. The CTCK domain maps to 1449-1523 (CLGEIVREAI…HLECGCRECS (75 aa)).

It is found in the secreted. In terms of biological role, may act as molecular guidance cue in cellular migration, and function may be mediated by interaction with roundabout homolog receptors. This chain is Slit homolog 3 protein (Slit3), found in Rattus norvegicus (Rat).